Consider the following 259-residue polypeptide: Ubiquinol-cytochrome c reductase complex assembly factor 1 (259 aa).

Belongs to the CBP3 family. Interacts with sloth1; the interaction is probably involved in the assembly and stability of the mitochondrial ubiquinol-cytochrome c reductase complex.

The protein resides in the mitochondrion inner membrane. Functionally, required for the assembly of the ubiquinol-cytochrome c reductase complex (mitochondrial respiratory chain complex III or cytochrome b-c1 complex). May be involved in cytochrome b translation and/or stability. This chain is Ubiquinol-cytochrome c reductase complex assembly factor 1, found in Drosophila melanogaster (Fruit fly).